Reading from the N-terminus, the 392-residue chain is GTPase Obg (392 aa).

Residues 1–159 form the Obg domain; it reads MKFVDEATIL…RDLQLELMLL (159 aa). Positions 127-148 are disordered; sequence NTRFKSSVNRTPRQKTMGTPGD. The span at 129–143 shows a compositional bias: polar residues; sequence RFKSSVNRTPRQKTM. In terms of domain architecture, OBG-type G spans 160-333; it reads ADVGMLGMPN…LCWDVMTFII (174 aa). Residues 166 to 173, 191 to 195, 213 to 216, 283 to 286, and 314 to 316 each bind GTP; these read GMPNAGKS, FTTLV, DIPG, NKID, and SAA. The Mg(2+) site is built by Ser-173 and Thr-193. Positions 362–386 are enriched in acidic residues; that stretch reads EEAEAEAEDDEDWDDDWDEDDEEGV. The disordered stretch occupies residues 362–392; that stretch reads EEAEAEAEDDEDWDDDWDEDDEEGVEFIYKR.

This sequence belongs to the TRAFAC class OBG-HflX-like GTPase superfamily. OBG GTPase family. Monomer. Mg(2+) serves as cofactor.

The protein resides in the cytoplasm. An essential GTPase which binds GTP, GDP and possibly (p)ppGpp with moderate affinity, with high nucleotide exchange rates and a fairly low GTP hydrolysis rate. Plays a role in control of the cell cycle, stress response, ribosome biogenesis and in those bacteria that undergo differentiation, in morphogenesis control. This is GTPase Obg from Klebsiella pneumoniae subsp. pneumoniae (strain ATCC 700721 / MGH 78578).